The chain runs to 530 residues: MKIPSLVGPDGKTSLREYAGYHGGGGGFGGQLRGWNPPSESADAALLPNYSRGNARADDLVRNNGYAANAVQLHQDHIVGSFFRLSYRPSWRYLGINEEDSRAFSRDVEAAWNEYAEDDFCGIDAERKRTFTMMIREGVAMHAFNGELCVQATWDSDSTRLFRTQFKMVSPKRVSNPNNIGDTRNCRAGVKINDSGAALGYYVSDDGYPGWMAQNWTYIPRELPGGRPSFIHVFEPMEDGQTRGANAFYSVMEQMKMLDTLQNTQLQSAIVKAMYAATIESELDTQSAMDFILGADNKEQQSKLTGWLGEMAAYYSAAPVRLGGARVPHLLPGDSLNLQSAQDTDNGYSTFEQSLLRYIAAGLGVSYEQLSRNYSQMSYSTARASANESWAYFMGRRKFVASRQACQMFLCWLEEAIVRRVVTLPSKARFSFQEARTAWGNANWIGSGRMAIDGLKEVQEAVMLIEAGLSTYEKECAKRGDDYQEIFAQQVRESMERRAAGLNPPAWAAAAFEAGVKKSNEEEQDGARAA.

This sequence belongs to the siphoviridae portal protein family. Homododecamer. Interacts with the terminase complex composed of two small and one large terminase subunits. Proteolytically cleaved by the viral protease during capsid maturation.

The protein resides in the virion. Its function is as follows. Forms the portal vertex of the capsid. This portal plays critical roles in head assembly, genome packaging, neck/tail attachment, and genome ejection. The portal protein multimerizes as a single ring-shaped homododecamer arranged around a central channel. Binds to the terminase subunits to form the packaging machine. The polypeptide is Portal protein (Escherichia phage N15 (Bacteriophage N15)).